A 287-amino-acid polypeptide reads, in one-letter code: Serine/arginine-rich SC35-like splicing factor SCL33 (287 aa).

Positions 1 to 34 (MRGRSYTPSPPRGYGRRGRSPSPRGRYGGRSRDL) are disordered. 2 positions are modified to phosphoserine: S9 and S20. The 79-residue stretch at 36–114 (TSLLVRNLRH…RELTVVFAEE (79 aa)) folds into the RRM domain. Residues 116-132 (RKKPTEMRARERGGGRF) are compositionally biased toward basic and acidic residues. The interval 116 to 287 (RKKPTEMRAR…QYDEDRSPSQ (172 aa)) is disordered. A phosphoserine mark is found at S165, S175, S177, S188, and S190. The segment covering 177 to 187 (SPREERYDGRR) has biased composition (basic and acidic residues). Positions 220–237 (SISRSPRRSRSPSPKRNR) are enriched in basic residues. Phosphoserine is present on residues S238, S248, S271, S284, and S286. Positions 244-260 (SISRSPRRSRSPRRSRR) are enriched in basic residues. Positions 278–287 (QYDEDRSPSQ) are enriched in basic and acidic residues.

The protein belongs to the splicing factor SR family. SCL subfamily. In terms of assembly, component of the spliceosome. Homodimer. Interacts with AFC2, CYP59, RS2Z33, RNU1 and SR45. The interaction with AFC2 depends on phosphorylation status. In terms of processing, phosphorylated by AFC2. Ubiquitous. Mostly expressed in roots, fruits and flowers, and, to a lower extent, in leaves.

The protein localises to the nucleus speckle. Its subcellular location is the nucleus. It is found in the nucleoplasm. It localises to the cytoplasm. Involved in intron recognition and spliceosome assembly. Binds to multiple 5'-GAAG-3' repeats found in its third intron, suggesting autoregulation of alternative splicing. May be necessary for accurate splicing of the 3' region of introns. The sequence is that of Serine/arginine-rich SC35-like splicing factor SCL33 (SCL33) from Arabidopsis thaliana (Mouse-ear cress).